We begin with the raw amino-acid sequence, 313 residues long: Foldase protein PrsA (313 aa).

Residues 1 to 20 form the signal peptide; that stretch reads MKKKLLAGAITLLSVATLAA. Cysteine 21 carries the N-palmitoyl cysteine lipid modification. Cysteine 21 carries S-diacylglycerol cysteine lipidation. The region spanning 143–241 is the PpiC domain; the sequence is TPDVTAQIIR…SQYYIVKLTK (99 aa).

This sequence belongs to the PrsA family.

It localises to the cell membrane. It catalyses the reaction [protein]-peptidylproline (omega=180) = [protein]-peptidylproline (omega=0). Plays a major role in protein secretion by helping the post-translocational extracellular folding of several secreted proteins. The sequence is that of Foldase protein PrsA from Streptococcus pneumoniae (strain ATCC BAA-255 / R6).